A 614-amino-acid chain; its full sequence is V-type proton ATPase catalytic subunit A (614 aa).

Glycine 247–threonine 254 contributes to the ATP binding site.

This sequence belongs to the ATPase alpha/beta chains family. In terms of assembly, V-ATPase is a heteromultimeric enzyme made up of two complexes: the ATP-hydrolytic V1 complex and the proton translocation V0 complex. The V1 complex consists of three catalytic AB heterodimers that form a heterohexamer, three peripheral stalks each consisting of EG heterodimers, one central rotor including subunits D and F, and the regulatory subunits C and H. The proton translocation complex V0 consists of the proton transport subunit a, a ring of proteolipid subunits c9c'', rotary subunit d, subunits e and f, and the accessory subunits VhaAC45 and ATP6AP2.

The catalysed reaction is ATP + H2O + 4 H(+)(in) = ADP + phosphate + 5 H(+)(out). With respect to regulation, ATP hydrolysis occurs at the interface between the nucleotide-binding domains of subunits A and B. ATP hydrolysis triggers a conformational change in the subunits D and F, which induces a shift of subunit d. The c-ring is subsequently rotated and results in a continuous proton translocation across the membrane. Catalytic subunit of the V1 complex of vacuolar(H+)-ATPase (V-ATPase), a multisubunit enzyme composed of a peripheral complex (V1) that hydrolyzes ATP and a membrane integral complex (V0) that translocates protons. V-ATPase is responsible for acidifying and maintaining the pH of intracellular compartments and in some cell types, is targeted to the plasma membrane, where it is responsible for acidifying the extracellular environment. This is V-type proton ATPase catalytic subunit A from Anopheles gambiae (African malaria mosquito).